The primary structure comprises 285 residues: 2-dehydro-3-deoxyphosphooctonate aldolase (285 aa).

This sequence belongs to the KdsA family.

It is found in the cytoplasm. It catalyses the reaction D-arabinose 5-phosphate + phosphoenolpyruvate + H2O = 3-deoxy-alpha-D-manno-2-octulosonate-8-phosphate + phosphate. It functions in the pathway carbohydrate biosynthesis; 3-deoxy-D-manno-octulosonate biosynthesis; 3-deoxy-D-manno-octulosonate from D-ribulose 5-phosphate: step 2/3. Its pathway is bacterial outer membrane biogenesis; lipopolysaccharide biosynthesis. The protein is 2-dehydro-3-deoxyphosphooctonate aldolase of Acinetobacter baumannii (strain SDF).